Reading from the N-terminus, the 785-residue chain is Probable cationic amino acid transporter (785 aa).

A run of 15 helical transmembrane segments spans residues 58-78, 83-103, 119-141, 187-207, 216-236, 251-271, 291-311, 337-357, 360-380, 384-404, 407-427, 568-588, 596-616, 628-648, and 655-675; these read LVSLGVGSCVGTGMYVVSGLV, AGPGVIVSFIIAAVASILSGV, AYTYSYVTVGEFVAFFIGWNLIL, YPDILALVIGILVTVIVALGV, VLNVINLVVWVFIMIAGLFFV, WSGVMQGAATCFYAFIGFDII, ASLVTCLTAYVSVSVILTLMV, IVAIGSIAGLTVSLLGSLFPM, VIYAMAGDGLLFRFLAHVSTY, PAVACVVSGFLSALLALLVSL, LIEMMSIGTLLAYTLVSVCVL, CVVLLFILIFCFCSLIIFGSG, WAVLLLVVLLLVLTLLVFIII, MAPCVPFVPASAMLVNVYLML, and WIRFGVWCFVGVLIYFGYGMW. The segment at 715 to 785 is disordered; it reads DQGPFQNWGK…VDDDLDDPLE (71 aa). A compositionally biased stretch (low complexity) spans 727 to 740; the sequence is QQKQPQQEQSEPQS. Over residues 775-785 the composition is skewed to acidic residues; it reads VVDDDLDDPLE.

It belongs to the amino acid-polyamine-organocation (APC) superfamily.

Its subcellular location is the lysosome membrane. May be involved in arginine transport. This is Probable cationic amino acid transporter (slc7a14a) from Danio rerio (Zebrafish).